Here is a 393-residue protein sequence, read N- to C-terminus: Envelope glycoprotein D (393 aa).

Residues 1–25 (MGRLTSGVGTAALLVVAVGLRVVCA) form the signal peptide. The interaction with TNFRSF14 stretch occupies residues 25 to 57 (AKYALADPSLKMADPNRFRGKNLPVLDRLTDPP). The Virion surface portion of the chain corresponds to 26–339 (KYALADPSLK…HHAPAAPSNP (314 aa)). H64 contacts Zn(2+). Cystine bridges form between C91–C214, C131–C227, and C143–C152. N-linked (GlcNAc...) asparagine; by host glycans are attached at residues N119 and N146. D240 is a binding site for Zn(2+). Positions 261–305 (LKIAGWHGPKPPYTSTLLPPELSDTTNATQPELVPEDPEDSALLE) are profusion. Residues 274–290 (TSTLLPPELSDTTNATQ) show a composition bias toward polar residues. Residues 274-301 (TSTLLPPELSDTTNATQPELVPEDPEDS) are disordered. A glycan (N-linked (GlcNAc...) asparagine; by host) is linked at N287. A helical membrane pass occupies residues 340–363 (GLIIGALAGSTLAVLVIGGIAFWV). At 364 to 393 (RRRAQMAPKRLRLPHIRDDDAPPSHQPLFY) the chain is on the intravirion side.

The protein belongs to the herpesviridae glycoprotein D family. Homodimer. Interacts with host receptor TNFRSF14. Interacts with host receptor NECTIN1. Interacts with host receptor NECTIN2. Interacts (via profusion domain) with gB; this interaction occurs in the absence of gH/gL. Interacts (via profusion domain) with gH/gL heterodimer; this interaction occurs in the absence of gB. Associates with the gB-gH/gL-gD complex. Interacts (via C-terminus) with UL11 tegument protein.

Its subcellular location is the virion membrane. In terms of biological role, envelope glycoprotein that binds to the host cell entry receptors NECTIN1, NECTIN2 and TNFRSF14/HVEM, promoting the virus entry into host cells. May trigger fusion with host membrane, by recruiting the fusion machinery composed of gB and gH/gL. The sequence is that of Envelope glycoprotein D (gD) from Homo sapiens (Human).